A 196-amino-acid chain; its full sequence is SAGA-associated factor 11 homolog (196 aa).

A disordered region spans residues 1–22 (MSAANMPTTTGAQGSGNQVPTT). An SGF11-type zinc finger spans residues 106 to 127 (CTCPNCDRLVAAARFAPHLEKC). The disordered stretch occupies residues 144–196 (TKEGATSAHLHSAGNTGGTDDEDDVDWSSDKRRKKSNQNSRNNGSKKNNGKSF). Position 172 is a phosphoserine (Ser172). Residues 180–196 (NQNSRNNGSKKNNGKSF) are compositionally biased toward low complexity.

The protein belongs to the SGF11 family. As to quaternary structure, component of some SAGA transcription coactivator-HAT complexes, at least composed of Ada2b, not/nonstop, Pcaf/Gcn5, Sgf11 and Spt3. Within the SAGA complex, Sgf11, e(y)2, and not/nonstop form an additional subcomplex of SAGA called the DUB module (deubiquitination module). Interacts directly with not/nonstop. Interacts with the AMEX complex component xmas-2. Interacts with Cbp80; important for promoter recruitment of Sgf11 that is not associated with the DUB module.

The protein localises to the nucleus. It is found in the nucleoplasm. The protein resides in the cytoplasm. In terms of biological role, component of the transcription regulatory histone acetylation (HAT) complex SAGA, a multiprotein complex that activates transcription by remodeling chromatin and mediating histone acetylation and deubiquitination. Within the SAGA complex, participates in a subcomplex that specifically deubiquitinates histone H2B. The SAGA complex is recruited to specific gene promoters by activators, where it is required for transcription. Required for nuclear receptor-mediated transactivation. Binds independently on SAGA to promoters in an RNA-dependent manner. Binds to mRNA and is essential for total mRNA export from the nucleus. Required to counteract heterochromatin silencing. Controls the development of neuronal connectivity in visual system by being required for accurate axon targeting in the optic lobe. Required for expression of ecdysone-induced genes such as br/broad. The sequence is that of SAGA-associated factor 11 homolog from Drosophila erecta (Fruit fly).